We begin with the raw amino-acid sequence, 152 residues long: Transcriptional repressor NrdR (152 aa).

A zinc finger lies at 3–34 (CAFCGNPDTQVIDSRVSEDGSSIRRRRRCPAC). In terms of domain architecture, ATP-cone spans 49–139 (PQVVKTAGHR…VYRSFQDISE (91 aa)).

It belongs to the NrdR family. Zn(2+) serves as cofactor.

Functionally, negatively regulates transcription of bacterial ribonucleotide reductase nrd genes and operons by binding to NrdR-boxes. The polypeptide is Transcriptional repressor NrdR (Chromobacterium violaceum (strain ATCC 12472 / DSM 30191 / JCM 1249 / CCUG 213 / NBRC 12614 / NCIMB 9131 / NCTC 9757 / MK)).